We begin with the raw amino-acid sequence, 130 residues long: Small ribosomal subunit protein uS11 (130 aa).

It belongs to the universal ribosomal protein uS11 family. In terms of assembly, part of the 30S ribosomal subunit. Interacts with proteins S7 and S18. Binds to IF-3.

Its function is as follows. Located on the platform of the 30S subunit, it bridges several disparate RNA helices of the 16S rRNA. Forms part of the Shine-Dalgarno cleft in the 70S ribosome. This Dehalococcoides mccartyi (strain ATCC BAA-2100 / JCM 16839 / KCTC 5957 / BAV1) protein is Small ribosomal subunit protein uS11.